The chain runs to 339 residues: Probable G-protein coupled receptor 33 (339 aa).

The Extracellular portion of the chain corresponds to 1–30; it reads MDLINSSTHVINVSTSLTNSTGVPTPAPKT. Residues Asn5, Asn12, and Asn19 are each glycosylated (N-linked (GlcNAc...) asparagine). A helical transmembrane segment spans residues 31-53; the sequence is IIAASLFMAFIIGVISNGLYLWM. The Cytoplasmic portion of the chain corresponds to 54–64; sequence LQFKMQRTVNT. A helical membrane pass occupies residues 65-86; it reads LLFFHLILSYFISTLILPFMAT. The Extracellular portion of the chain corresponds to 87–103; the sequence is SFLQDNHWVFGSVLCKA. Cys101 and Cys179 are joined by a disulfide. A helical transmembrane segment spans residues 104–124; it reads FNSTLSVSMFASVFFLSAISV. The Cytoplasmic segment spans residues 125 to 143; sequence ARYYLILHPVWSQQHRTPH. The chain crosses the membrane as a helical span at residues 144–165; that stretch reads WASRIALQIWISATILSIPYLV. Residues 166–209 are Extracellular-facing; it reads FRTTHDDHKGRIKCQNNYIVSTDWESKEHQTLGQWIHAACFVGR. A helical transmembrane segment spans residues 210 to 230; it reads FLLGFLLPFLVIIFCYKRVAT. The Cytoplasmic segment spans residues 231 to 246; it reads KMKEKGLFKSSKPFKV. Residues 247-268 traverse the membrane as a helical segment; it reads MVTAVISFFVCWMPYHVHSGLV. Residues 269-283 lie on the Extracellular side of the membrane; it reads LTKSQPLPLHLTLGL. A helical transmembrane segment spans residues 284-303; it reads AVVTISFNTVVSPVLYLFTG. The Cytoplasmic portion of the chain corresponds to 304 to 339; the sequence is ENFKVFKKSILALFNSTFSDISSTERTQTLNSETEI.

The protein belongs to the G-protein coupled receptor 1 family. As to expression, expressed predominantly in lung, spleen and testis.

It localises to the cell membrane. Orphan receptor; could be a chemoattractant receptor. The chain is Probable G-protein coupled receptor 33 (Gpr33) from Mus musculus (Mouse).